We begin with the raw amino-acid sequence, 1806 residues long: Non-reducing polyketide synthase pks12 (1806 aa).

One can recognise a Starter acyltransferase (SAT) domain in the interval 30-191 (TDTMSGMISL…TKLHLRGKVH (162 aa)). In terms of domain architecture, Ketosynthase family 3 (KS3) spans 330–755 (ENAIAIVGAG…GSNSALICGE (426 aa)). Residues C504, H639, and H678 each act as for beta-ketoacyl synthase activity in the active site. The interval 860–1156 (LAFSGQSKQT…HNPSQHTFLG (297 aa)) is malonyl-CoA:ACP transacylase (MAT) domain. In terms of domain architecture, Malonyl-CoA:ACP transacylase (MAT) spans 862-1147 (FSGQSKQTIG…IIPMVKRATH (286 aa)). S947 serves as the catalytic For acyl/malonyl transferase activity. The segment at 1249–1383 (PQTPPLKLVT…GRFSVTSHID (135 aa)) is N-terminal hotdog fold. One can recognise a PKS/mFAS DH domain in the interval 1249-1558 (PQTPPLKLVT…FSRFPIAKLE (310 aa)). The tract at residues 1249 to 1558 (PQTPPLKLVT…FSRFPIAKLE (310 aa)) is product template (PT) domain. Residue H1288 is the Proton acceptor; for dehydratase activity of the active site. The C-terminal hotdog fold stretch occupies residues 1404–1558 (SERLMAGRAY…FSRFPIAKLE (155 aa)). D1468 functions as the Proton donor; for dehydratase activity in the catalytic mechanism. The Carrier domain maps to 1727–1804 (QSKLRIRQRI…ELVDYVVISS (78 aa)). S1764 is modified (O-(pantetheine 4'-phosphoryl)serine).

The cofactor is pantetheine 4'-phosphate.

It participates in secondary metabolite biosynthesis. In terms of biological role, non-reducing polyketide synthase; part of the gene cluster that mediates the biosynthesis of mitorubrinol and mitorubrinic acid, two virulence factors that improve T.marneffei intracellular survival in macrophages. The two polyketide synthases pks12 and pks11 are probably responsible for sequential use in the biosynthesis of mitorubrinol and mitorubrinic acid. The first part of the biosynthesis is probably catalyzed by pks12, which synthesized orsellinic acid. This tetraketide is then used as a starter unit for pks11, which possesses a SAT domain, in the second part of the biosynthesis. Pks11, contains a methyltransferase domain, also served that methylates the products, using a methyl group from S-adenosylmethionine. This is Non-reducing polyketide synthase pks12 from Talaromyces marneffei (Penicillium marneffei).